Consider the following 152-residue polypeptide: Snaclec coagulation factor IX/factor X-binding protein subunit A (152 aa).

An N-terminal signal peptide occupies residues 1-23; sequence MGRFIFMSFGLLVVAASLRGTGA. Positions 24–152 constitute a C-type lectin domain; sequence DCLSGWSSYE…GQQNPFVCEA (129 aa). Disulfide bonds link Cys25–Cys36, Cys53–Cys150, and Cys125–Cys142. Ca(2+) is bound by residues Ser64, Glu66, and Glu70. Glu151 is a binding site for Ca(2+).

The protein belongs to the snaclec family. Heterodimer of subunits A and B; disulfide-linked. As to expression, expressed by the venom gland.

Its subcellular location is the secreted. In terms of biological role, anticoagulant protein which binds to the gamma-carboxyglutamic acid-domain regions of factors IX (F9) and factor X (F10) in the presence of calcium with a 1 to 1 stoichiometry. The protein is Snaclec coagulation factor IX/factor X-binding protein subunit A of Protobothrops flavoviridis (Habu).